Here is a 70-residue protein sequence, read N- to C-terminus: MELLNKSISVVKNVVCNFLFEKIKIDENINIDGIDSGPGMSKRLTTSTNINVVLVLIIALIIFILMLDGV.

Residues Ile50 to Val70 form a helical membrane-spanning segment.

Its subcellular location is the membrane. This is an uncharacterized protein from Dictyostelium discoideum (Social amoeba).